The primary structure comprises 260 residues: MAVVAPTAREENVYMAKLADRAESDEEMVEFMEKVSNSLGSEELTVEERNLLSVAYKNVIGARRASWRIISSIEQKEESRGNEEHVNSIREYRSKIENELSKICDGILKLLDSKLIPSATSGDSKVFYLKMKGDYHRYLAEFKTGAERKEAAESTLTAYKAAQDIASAELAPTHPIRLGLALNFSVFYYEILNSPDRACNLAKQAFDEAIAELDTLGEESYKDSTLIMQLLRDNLTLWTSDMQDDGADEIKEDPKPEEKN.

This sequence belongs to the 14-3-3 family. In terms of assembly, homodimer.

This Solanum lycopersicum (Tomato) protein is 14-3-3 protein 3 (TFT3).